Reading from the N-terminus, the 87-residue chain is Putative phytosulfokines 4 (87 aa).

Residues 1-23 form the signal peptide; it reads MANLSTLITIALLLCATMLTCSA. The propeptide occupies 24 to 77; it reads RPEPAYFASFTTSPADTLSLEMIESKLHEVAGESCDKEDDEDCLVRRTLTAHLD. 2 positions are modified to sulfotyrosine: Tyr78 and Tyr80. The propeptide occupies 83-87; sequence KNNHH.

Belongs to the phytosulfokine family. Sulfation is important for activity and for the binding to a putative membrane receptor.

The protein localises to the secreted. Promotes plant cell differentiation, organogenesis and somatic embryogenesis as well as cell proliferation. The protein is Putative phytosulfokines 4 (PSK4) of Arabidopsis thaliana (Mouse-ear cress).